Here is a 483-residue protein sequence, read N- to C-terminus: Glutamyl-tRNA(Gln) amidotransferase subunit A (483 aa).

Residues K75 and S150 each act as charge relay system in the active site. The active-site Acyl-ester intermediate is S174.

It belongs to the amidase family. GatA subfamily. Heterotrimer of A, B and C subunits.

It catalyses the reaction L-glutamyl-tRNA(Gln) + L-glutamine + ATP + H2O = L-glutaminyl-tRNA(Gln) + L-glutamate + ADP + phosphate + H(+). In terms of biological role, allows the formation of correctly charged Gln-tRNA(Gln) through the transamidation of misacylated Glu-tRNA(Gln) in organisms which lack glutaminyl-tRNA synthetase. The reaction takes place in the presence of glutamine and ATP through an activated gamma-phospho-Glu-tRNA(Gln). The sequence is that of Glutamyl-tRNA(Gln) amidotransferase subunit A from Microcystis aeruginosa (strain NIES-843 / IAM M-2473).